Here is a 343-residue protein sequence, read N- to C-terminus: Anthranilate phosphoribosyltransferase (343 aa).

Residues Gly-84, 87–88 (GD), Thr-92, 94–97 (NIST), 112–120 (KHGNRGVSS), and Ser-124 each bind 5-phospho-alpha-D-ribose 1-diphosphate. Anthranilate is bound at residue Gly-84. Ser-96 is a binding site for Mg(2+). Anthranilate is bound at residue Asn-115. Position 170 (Arg-170) interacts with anthranilate. Mg(2+)-binding residues include Asp-229 and Glu-230.

The protein belongs to the anthranilate phosphoribosyltransferase family. In terms of assembly, homodimer. Mg(2+) is required as a cofactor.

It catalyses the reaction N-(5-phospho-beta-D-ribosyl)anthranilate + diphosphate = 5-phospho-alpha-D-ribose 1-diphosphate + anthranilate. It participates in amino-acid biosynthesis; L-tryptophan biosynthesis; L-tryptophan from chorismate: step 2/5. Functionally, catalyzes the transfer of the phosphoribosyl group of 5-phosphorylribose-1-pyrophosphate (PRPP) to anthranilate to yield N-(5'-phosphoribosyl)-anthranilate (PRA). This chain is Anthranilate phosphoribosyltransferase, found in Burkholderia orbicola (strain MC0-3).